A 1070-amino-acid polypeptide reads, in one-letter code: DNA-directed RNA polymerase subunit beta (1070 aa).

The protein belongs to the RNA polymerase beta chain family. In plastids the minimal PEP RNA polymerase catalytic core is composed of four subunits: alpha, beta, beta', and beta''. When a (nuclear-encoded) sigma factor is associated with the core the holoenzyme is formed, which can initiate transcription.

The protein resides in the plastid. The protein localises to the chloroplast. The catalysed reaction is RNA(n) + a ribonucleoside 5'-triphosphate = RNA(n+1) + diphosphate. Its function is as follows. DNA-dependent RNA polymerase catalyzes the transcription of DNA into RNA using the four ribonucleoside triphosphates as substrates. This is DNA-directed RNA polymerase subunit beta from Chaetosphaeridium globosum (Charophycean green alga).